The sequence spans 321 residues: Pirin-like protein 2 (321 aa).

Fe cation contacts are provided by His88, His90, His132, and Glu134.

It belongs to the pirin family. In terms of assembly, interacts with RD21A, RD21B and XCP2.

It localises to the cytoplasm. Its subcellular location is the cytosol. It is found in the nucleus. In terms of biological role, involved in susceptibility to the bacterial plant pathogen Ralstonia solanacearum. Stabilizes the xylem cysteine protease XCP2 by blocking its autolysis. The chain is Pirin-like protein 2 from Arabidopsis thaliana (Mouse-ear cress).